A 331-amino-acid polypeptide reads, in one-letter code: Gem-associated protein 2 (331 aa).

Disordered stretches follow at residues 1-23 (MDEF…NEPL), 101-130 (SNRP…LIPQ), and 151-222 (NNNN…TKKP). Over residues 11–21 (VGEEIEPDDNE) the composition is skewed to acidic residues. Positions 106 to 126 (NNNNNNNNNNNNNNNNNNNNN) are enriched in low complexity. Residues 165–215 (DNQEDDDDDENNEDYEYNENKEEEEEEEEEEEEEEEVEEEEEEEEEEEEVV) show a composition bias toward acidic residues. Positions 173-224 (DENNEDYEYNENKEEEEEEEEEEEEEEEVEEEEEEEEEEEEVVDYSTKKPTL) form a coiled coil.

The protein belongs to the gemin-2 family.

It is found in the nucleus. The protein localises to the gem. The protein resides in the cytoplasm. Functionally, the SMN complex catalyzes the assembly of small nuclear ribonucleoproteins (snRNPs), the building blocks of the spliceosome, and thereby plays an important role in the splicing of cellular pre-mRNAs. Most spliceosomal snRNPs contain a common set of Sm proteins SNRPB, SNRPD1, SNRPD2, SNRPD3, SNRPE, SNRPF and SNRPG that assemble in a heptameric protein ring on the Sm site of the small nuclear RNA to form the core snRNP (Sm core). In the cytosol, the Sm proteins SNRPD1, SNRPD2, SNRPE, SNRPF and SNRPG (5Sm) are trapped in an inactive 6S pICln-Sm complex by the chaperone CLNS1A that controls the assembly of the core snRNP. To assemble core snRNPs, the SMN complex accepts the trapped 5Sm proteins from CLNS1A. Binding of snRNA inside 5Sm ultimately triggers eviction of the SMN complex, thereby allowing binding of SNRPD3 and SNRPB to complete assembly of the core snRNP. Within the SMN complex, GEMIN2 constrains the conformation of 5Sm, thereby promoting 5Sm binding to snRNA containing the snRNP code (a nonameric Sm site and a 3'-adjacent stem-loop), thus preventing progression of assembly until a cognate substrate is bound. May play an essential role in spliceosomal snRNP assembly in the cytoplasm and may be required for pre-mRNA splicing in the nucleus. In Dictyostelium discoideum (Social amoeba), this protein is Gem-associated protein 2 (gemin2).